The primary structure comprises 342 residues: Transcriptional regulator of the unfolded protein response hacA (342 aa).

The tract at residues Met-1 to Met-105 is disordered. 2 stretches are compositionally biased toward basic and acidic residues: residues Pro-35–Lys-48 and Lys-74–Leu-88. Residues Glu-80 to Leu-143 enclose the bZIP domain. The tract at residues Arg-82–Arg-135 is basic motif. Residues Leu-136–Leu-143 are leucine-zipper. Disordered stretches follow at residues Glu-146–Leu-167 and Glu-306–Thr-330. Residues Thr-315–Thr-330 show a composition bias toward polar residues.

It belongs to the bZIP family.

The protein localises to the nucleus. Its function is as follows. Master transcriptional regulator of the unfolded protein response (UPR) that recognizes and binds to the UPR element (UPRE) in the promoter of UPR-regulated genes. In the canonical UPR pathway, the ireA RNase splices the cytoplasmic mRNA hacA, which alters the reading frame to allow translation of the bZIP transcription factor hacA. Induces the expression of pmrA, scrA and spfA in response to UPR. This is Transcriptional regulator of the unfolded protein response hacA from Aspergillus fumigatus (strain ATCC MYA-4609 / CBS 101355 / FGSC A1100 / Af293) (Neosartorya fumigata).